Consider the following 481-residue polypeptide: Beta-amyrin 28-monooxygenase (481 aa).

The chain crosses the membrane as a helical span at residues 4-24 (FYVPLLSLFVLFVSLSFYFLF). Residue C428 coordinates heme.

The protein belongs to the cytochrome P450 family. Heme serves as cofactor.

It is found in the membrane. The enzyme catalyses beta-amyrin + 3 reduced [NADPH--hemoprotein reductase] + 3 O2 = oleanolate + 3 oxidized [NADPH--hemoprotein reductase] + 4 H2O + 4 H(+). In terms of biological role, catalyzes the oxidation of the methyl group to a carboxyl group at the C-28 position of beta-amyrin to form oleanolate. This chain is Beta-amyrin 28-monooxygenase, found in Kalopanax septemlobus (Castor aralia).